Reading from the N-terminus, the 249-residue chain is MIDQYFQKINERLKLVLKHEKDNLKKAAHAVSKAVQNGGIIQLFGCGHSHIMAEEVFYRAGGLVPVKPIFVEPLMLHEGAVRSSMLERMNDFAPSFIDREDIRSEDVFFILSTSGRNPVPIDVALAAKAKGAYTIAITSLEYSKSQPSRHKSGRLLYEVVDLVIDNHSVKGDAILTHQNVSVPFAPTSTVVGSAILNAVLAEAIALMAENGVEPPVFLSGNIEGADEHNRRWIEKYKERIPVLIEGCQP.

The region spanning 31-214 is the SIS domain; that stretch reads VSKAVQNGGI…ALMAENGVEP (184 aa).

Belongs to the UPF0309 family.

The chain is UPF0309 protein GTNG_1302 from Geobacillus thermodenitrificans (strain NG80-2).